We begin with the raw amino-acid sequence, 339 residues long: MAPTARTPTARTRDDRRATTRTARLRTRIPEPDEEPDLLGQYLTQIGATPLLTAEDEVRLATRIEAGVRAREELETADTGEPAPTPRRRRTLEETVHDGQEAKDHMVRANLRLVVSMAKRHAHRGLPLLDVIQEGNLGLIRAVEKFDHTKGFKFSTYATWWIRQAIERGLATHARTVRLPVHVVEQLQKLAKVERKLRAGLDREPTTEEVAAESGIDVDKVVWLRRVGRDAVSLDTPVDETGDTVVGDLIPDTEVLRAPEVAEFQALAAELREAVGTLAPRESLILSLRYGLHDGRPRTLQQVAQHVGLTRERVRQLEKESLAHLRAPENRERLLDWAS.

Residues methionine 1 to alanine 10 are compositionally biased toward low complexity. Disordered stretches follow at residues methionine 1 to aspartate 37 and arginine 71 to glutamate 101. Over residues threonine 91–glutamate 101 the composition is skewed to basic and acidic residues. The Polymerase core binding motif lies at aspartate 130–valine 143. Positions leucine 300–lysine 319 form a DNA-binding region, H-T-H motif.

This sequence belongs to the sigma-70 factor family. In terms of assembly, interacts transiently with the RNA polymerase catalytic core.

In terms of biological role, sigma factors are initiation factors that promote the attachment of RNA polymerase to specific initiation sites and are then released. This Streptomyces coelicolor (strain ATCC BAA-471 / A3(2) / M145) protein is RNA polymerase principal sigma factor HrdC (hrdC).